Consider the following 1214-residue polypeptide: NBPF family member NBPF1 (1214 aa).

Residues 70 to 128 (MLRNERQFKEEKLAEQLKQAEELRQYKVLVHSQERELTQLREKLREGRDASRSLNQHLQ) are a coiled coil. The disordered stretch occupies residues 162–200 (LSPENDEDEDEDVQVEEAEKVLESSAPREVQKAEESKVP). A compositionally biased stretch (acidic residues) spans 165–177 (ENDEDEDEDVQVE). The Olduvai 1 domain occupies 165–259 (ENDEDEDEDV…ECQDAVNILP (95 aa)). Residues 190–200 (EVQKAEESKVP) show a composition bias toward basic and acidic residues. Residues 292-399 (NEKLHPQLAE…ASRSLNQHLQ (108 aa)) are a coiled coil. Positions 433–471 (LSPENDEDEDEDVQVEEAEKVLESSAPREVQKAEESKVP) are disordered. Residues 436 to 448 (ENDEDEDEDVQVE) show a composition bias toward acidic residues. An Olduvai 2 domain is found at 436-530 (ENDEDEDEDV…ECQDAVNILP (95 aa)). The segment covering 461–471 (EVQKAEESKVP) has biased composition (basic and acidic residues). Residues 610 to 670 (KSMLRNERQF…ASCSLNQHLQ (61 aa)) adopt a coiled-coil conformation. 6 consecutive Olduvai domains span residues 707-799 (ENDN…HIIP), 800-888 (ENES…ATGP), 891-946 (SREL…LDMD), 947-1038 (EIEK…PPCP), 1041-1114 (SREL…RSTK), and 1116-1214 (RRRR…IFPQ). Disordered regions lie at residues 722–746 (EKVQKSSAPREMPKAEEKEVPEDSL) and 791–837 (WEDA…EGYS). 2 stretches are compositionally biased toward acidic residues: residues 801 to 810 (NESDDEEEEE) and 821 to 833 (ESEEEEVPQESWD). Over residues 1102–1121 (GKGKKRRGRRSTKKRRRRGR) the composition is skewed to basic residues. The tract at residues 1102 to 1136 (GKGKKRRGRRSTKKRRRRGRKEGEEDQNPPCPRLS) is disordered.

The protein belongs to the NBPF family. As to expression, widely expressed. The only tissue which shows a weak expression is kidney.

The protein localises to the cytoplasm. This Homo sapiens (Human) protein is NBPF family member NBPF1.